A 191-amino-acid polypeptide reads, in one-letter code: GDP-mannose pyrophosphatase (191 aa).

Residues tyrosine 17, 38–40, arginine 67, and 85–87 contribute to the GDP-alpha-D-mannose site; these read KRE and AGL. Residues 43-180 enclose the Nudix hydrolase domain; it reads DRGNGATILL…EIRDGKTVLL (138 aa). Positions 85, 100, and 104 each coordinate Mg(2+). The Nudix box signature appears at 86–106; it reads GLLDNDEPEVCIRKEAIEETG. GDP-alpha-D-mannose contacts are provided by residues glutamate 104, glutamate 127, 150–151, and lysine 176; that span reads DE. Position 151 (glutamate 151) interacts with Mg(2+).

It belongs to the Nudix hydrolase family. NudK subfamily. As to quaternary structure, homodimer. Requires Mg(2+) as cofactor.

It carries out the reaction GDP-alpha-D-mannose + H2O = alpha-D-mannose 1-phosphate + GMP + 2 H(+). Functionally, nucleoside diphosphate sugar hydrolase that hydrolyzes GDP-mannose as its preferred substrate, yielding GMP and mannose-1-phosphate. The chain is GDP-mannose pyrophosphatase (nudK) from Salmonella arizonae (strain ATCC BAA-731 / CDC346-86 / RSK2980).